A 181-amino-acid polypeptide reads, in one-letter code: 28 kDa heat- and acid-stable phosphoprotein (181 aa).

Over residues 1–14 (MPKGGRKGGHKGRV) the composition is skewed to basic residues. The interval 1-118 (MPKGGRKGGH…RREREEIEKQ (118 aa)) is disordered. Phosphothreonine is present on Thr18. Ser19 carries the post-translational modification Phosphoserine. Basic and acidic residues predominate over residues 50-59 (DPKKEKKSLD). Lys52 participates in a covalent cross-link: Glycyl lysine isopeptide (Lys-Gly) (interchain with G-Cter in SUMO2). Phosphoserine is present on residues Ser57, Ser60, and Ser63. Residues 60-69 (SDESEDEDDD) show a composition bias toward acidic residues. Tyr70 bears the Phosphotyrosine mark. Basic and acidic residues predominate over residues 102–118 (DGPKELSRREREEIEKQ). Lys126 carries the post-translational modification N6-methyllysine. Residues Lys132 and Lys164 each carry the N6-acetyllysine modification. Residues 151–167 (EEAARKKEEERKAKDDA) are compositionally biased toward basic and acidic residues. Residues 151–181 (EEAARKKEEERKAKDDATLSGKRMQSLSLNK) form a disordered region. A phosphoserine mark is found at Ser176 and Ser178.

This sequence belongs to the PDAP1 family. Phosphorylated by several kinases in vitro. In vivo, can be phosphorylated by CK2. As to expression, present in all tissues tested, including brain, lung, spleen, kidney, liver, heart, and muscle, in decreasing order of abundance.

The chain is 28 kDa heat- and acid-stable phosphoprotein (Pdap1) from Rattus norvegicus (Rat).